Reading from the N-terminus, the 628-residue chain is Venom redulysin 1 (628 aa).

The first 19 residues, 1–19 (MSKLWLLLLLVAAFQAVHS), serve as a signal peptide directing secretion. Positions 20-368 (YPAAESDYLE…EDDVAESDEE (349 aa)) are excised as a propeptide. Residues 290–313 (DYEEEEEEEEEEEFELEEDYEEDP) form a disordered region. Positions 291 to 313 (YEEEEEEEEEEEFELEEDYEEDP) are enriched in acidic residues.

Belongs to the redulysin-like family. Post-translationally, contains 5 disulfide bonds. Expressed by the venom gland (posterior main gland) (at protein level).

The protein localises to the secreted. Highly abundant protein that may be responsible for the observed disruption of sensory neuron membranes, since it is homologous to proteins such as trialysin, which forms pores in lipid bilayers. Probable insecticidal toxin. This is Venom redulysin 1 from Platymeris rhadamanthus (Red spot assassin bug).